The sequence spans 204 residues: Small ribosomal subunit protein uS4 (204 aa).

A disordered region spans residues 22–43 (SGKELARRPYAPGDHGNTGRRP). The S4 RNA-binding domain maps to 94–154 (TRLDSVVFRL…ERSKKIVPIL (61 aa)).

This sequence belongs to the universal ribosomal protein uS4 family. In terms of assembly, part of the 30S ribosomal subunit. Contacts protein S5. The interaction surface between S4 and S5 is involved in control of translational fidelity.

One of the primary rRNA binding proteins, it binds directly to 16S rRNA where it nucleates assembly of the body of the 30S subunit. Its function is as follows. With S5 and S12 plays an important role in translational accuracy. This is Small ribosomal subunit protein uS4 from Oenococcus oeni (strain ATCC BAA-331 / PSU-1).